The following is a 621-amino-acid chain: MBT domain-containing protein 1 (621 aa).

The segment covering 1–21 (MEKTKDPADRSSRSERKRRDS) has biased composition (basic and acidic residues). Residues 1-55 (MEKTKDPADRSSRSERKRRDSFGMFDGYDSCSEDTSSSSSSDESEEEVAPLPSSL) form a disordered region. Low complexity predominate over residues 29 to 41 (DSCSEDTSSSSSS). The FCS-type zinc-finger motif lies at 68–103 (PDGKSGMATCEMCGMVGVRDAFYSKTKRFCSVSCSR). Zn(2+) is bound by residues C77, C80, C97, and C101. MBT repeat units follow at residues 164–268 (FSWG…LVPP), 276–373 (TNWK…IGHR), 374–479 (FKRT…LTPP), and 487–583 (FKWF…LQPP). Residues 581–621 (QPPAPQSNKDGQSNVSKQKKKSKSQPYKGHKKNFRKPGNRP) form a disordered region. The segment covering 597-621 (KQKKKSKSQPYKGHKKNFRKPGNRP) has biased composition (basic residues).

Monomer. Component of the NuA4 histone acetyltransferase complex.

The protein resides in the nucleus. The protein localises to the chromosome. In terms of biological role, chromatin reader component of the NuA4 histone acetyltransferase complex, a multiprotein complex involved in transcriptional activation of select genes principally by acetylation of nucleosomal histones H4 and H2A. The NuA4 complex plays a direct role in repair of DNA double-strand breaks (DSBs) by promoting homologous recombination (HR). MBTD1 specifically recognizes and binds monomethylated and dimethylated 'Lys-20' on histone H4 (H4K20me1 and H4K20me2, respectively). In the NuA4 complex, MBTD1 promotes recruitment of the complex to H4K20me marks by competing with TP53BP1 for binding to H4K20me. Following recruitment to H4K20me at DNA breaks, the NuA4 complex catalyzes acetylation of 'Lys-15' on histone H2A (H2AK15), blocking the ubiquitination mark required for TP53BP1 localization at DNA breaks, thereby promoting homologous recombination (HR). The chain is MBT domain-containing protein 1 from Xenopus laevis (African clawed frog).